Here is a 320-residue protein sequence, read N- to C-terminus: MKKDLISNHIQLDDSGKLIHLLGLEGLSKQYLIHILDTADSLIDVSGNLKKSKALDDIFVANLFFEPSTRTRNTFEIAAMRSSANVINVDLANSALKKNEDLLNTMRTLKAMQIDMFVIRHKQNGLPHHVVQHLKDVSILNAGDGINAHPTQALLDMLSIRQHKKTFENLSVAIVGDITHSRVAHSDIQALKTLGTTDIRLIAPKVLQYNLAPCSVVKHFDDIEPGLKNCDVVIVLRLQKERMIEADIPNEQEYFDNFGLTPKRLALAKPDAIVMHPGPTNRGVEIDSNVADGNQSIILQQVTNGIAVRMAVMQILVNKS.

Carbamoyl phosphate is bound by residues Arg-70 and Thr-71. Lys-98 contributes to the L-aspartate binding site. 3 residues coordinate carbamoyl phosphate: Arg-120, His-149, and Gln-152. Positions 182 and 237 each coordinate L-aspartate. The carbamoyl phosphate site is built by Gly-278 and Pro-279.

The protein belongs to the aspartate/ornithine carbamoyltransferase superfamily. ATCase family. Heterododecamer (2C3:3R2) of six catalytic PyrB chains organized as two trimers (C3), and six regulatory PyrI chains organized as three dimers (R2).

The enzyme catalyses carbamoyl phosphate + L-aspartate = N-carbamoyl-L-aspartate + phosphate + H(+). The protein operates within pyrimidine metabolism; UMP biosynthesis via de novo pathway; (S)-dihydroorotate from bicarbonate: step 2/3. Functionally, catalyzes the condensation of carbamoyl phosphate and aspartate to form carbamoyl aspartate and inorganic phosphate, the committed step in the de novo pyrimidine nucleotide biosynthesis pathway. This Ruthia magnifica subsp. Calyptogena magnifica protein is Aspartate carbamoyltransferase catalytic subunit.